A 275-amino-acid polypeptide reads, in one-letter code: Peflin (275 aa).

8 consecutive repeat copies span residues P21–P29, H31–G39, P41–P49, A50–S59, A60–P68, P76–L84, P85–G91, and T92–G100. 2 disordered regions span residues P21–G45 and S59–P103. The 8 X 9 AA approximate tandem repeat of [AP]-P-G-G-P-Y-G-G-P-P stretch occupies residues P21–G100. A compositionally biased stretch (gly residues) spans H31 to G45. Over residues S59–G70 the composition is skewed to low complexity. EF-hand domains follow at residues N105–S140, T146–L174, K172–N207, L208–L244, and T245–M274. The Ca(2+) site is built by D118, D120, S122, Y124, and E129. Positions 185, 187, 189, 191, and 196 each coordinate Ca(2+). The interval T195–L275 is required for interaction with PDCD6.

Heterodimer; heterodimerizes (via the EF-hand 5) with PDCD6. Dissociates from PDCD6 in presence of calcium. In terms of processing, ubiquitinated by the BCR(KLHL12) E3 ubiquitin ligase complex.

It is found in the cytoplasm. The protein resides in the endoplasmic reticulum. The protein localises to the membrane. It localises to the cytoplasmic vesicle. Its subcellular location is the COPII-coated vesicle membrane. Functionally, calcium-binding protein that acts as an adapter that bridges unrelated proteins or stabilizes weak protein-protein complexes in response to calcium. Together with PDCD6, acts as a calcium-dependent adapter for the BCR(KLHL12) complex, a complex involved in endoplasmic reticulum (ER)-Golgi transport by regulating the size of COPII coats. In response to cytosolic calcium increase, the heterodimer formed with PDCD6 interacts with, and bridges together the BCR(KLHL12) complex and SEC31 (SEC31A or SEC31B), promoting monoubiquitination of SEC31 and subsequent collagen export, which is required for neural crest specification. Its role in the heterodimer formed with PDCD6 is however unclear: some evidence shows that PEF1 and PDCD6 work together and promote association between PDCD6 and SEC31 in presence of calcium. Other reports show that PEF1 dissociates from PDCD6 in presence of calcium, and may act as a negative regulator of PDCD6. Also acts as a negative regulator of ER-Golgi transport; possibly by inhibiting interaction between PDCD6 and SEC31. The polypeptide is Peflin (Mus musculus (Mouse)).